The sequence spans 639 residues: Zinc finger protein ZIC 5 (639 aa).

Disordered stretches follow at residues 113–171, 189–251, 323–355, and 379–409; these read PCGG…GHSR, HGAP…GHPH, PGPH…HLPG, and PDEL…PCSK. The segment covering 124–150 has biased composition (pro residues); sequence SAPPPPAPPLPPTPSPPPPPPPPPPPA. 2 stretches are compositionally biased toward pro residues: residues 331–343 and 385–401; these read APPP…PAPA and LPPP…PPPA. The segment at 434-461 adopts a C2H2-type 1; atypical zinc-finger fold; the sequence is HVCFWEDCPREGKPFKAKYKLINHIRVH. 3 consecutive C2H2-type zinc fingers follow at residues 467–491, 497–521, and 527–551; these read FPCP…KRTH, FKCE…SHVH, and YYCK…MKIH. Residues 548 to 568 are disordered; sequence MKIHCKSPPPSPGPLGYSSVG. Phosphoserine is present on residues Ser554, Ser558, and Ser576. The disordered stretch occupies residues 607 to 639; sequence APSHLHTPSSNGTTSETEDEEIYGNPEVVRTIH. The span at 612-621 shows a compositional bias: polar residues; it reads HTPSSNGTTS.

This sequence belongs to the GLI C2H2-type zinc-finger protein family.

The protein resides in the nucleus. In terms of biological role, essential for neural crest development, converting cells from an epidermal fate to a neural crest cell fate. Binds to DNA. This is Zinc finger protein ZIC 5 (ZIC5) from Homo sapiens (Human).